Here is an 87-residue protein sequence, read N- to C-terminus: Retinal rod rhodopsin-sensitive cGMP 3',5'-cyclic phosphodiesterase subunit gamma (87 aa).

Position 1 is an N-acetylmethionine (Met-1). Over residues 1–12 (MNLEPPKAEIRS) the composition is skewed to basic and acidic residues. A disordered region spans residues 1–55 (MNLEPPKAEIRSATRVMGGPVTPRKGPPKFKQRQTRQFKSKPPKKGVQGFGDDIP). Positions 26-44 (GPPKFKQRQTRQFKSKPPK) are enriched in basic residues.

The protein belongs to the rod/cone cGMP-PDE gamma subunit family. In terms of assembly, oligomer composed of two catalytic chains (alpha and beta), an inhibitory chain (gamma) and the delta chain.

The catalysed reaction is 3',5'-cyclic GMP + H2O = GMP + H(+). Functionally, participates in processes of transmission and amplification of the visual signal. cGMP-PDEs are the effector molecules in G-protein-mediated phototransduction in vertebrate rods and cones. The sequence is that of Retinal rod rhodopsin-sensitive cGMP 3',5'-cyclic phosphodiesterase subunit gamma (PDE6G) from Bos taurus (Bovine).